The primary structure comprises 450 residues: uncharacterized protein (450 aa).

The segment covering 387 to 416 (ELDEKNNNKEENKNQDLHEPKESSSEDLLK) has biased composition (basic and acidic residues). The tract at residues 387 to 439 (ELDEKNNNKEENKNQDLHEPKESSSEDLLKRLNNLKINTNEGPVQDNENHDNE) is disordered.

This is an uncharacterized protein from Saccharomyces cerevisiae (strain ATCC 204508 / S288c) (Baker's yeast).